We begin with the raw amino-acid sequence, 449 residues long: Glutamyl-tRNA reductase (449 aa).

Substrate-binding positions include 58–61 (TCNR), S121, 126–128 (ETQ), and Q132. C59 serves as the catalytic Nucleophile. An NADP(+)-binding site is contributed by 203–208 (GLGEMA).

This sequence belongs to the glutamyl-tRNA reductase family. In terms of assembly, homodimer.

It catalyses the reaction (S)-4-amino-5-oxopentanoate + tRNA(Glu) + NADP(+) = L-glutamyl-tRNA(Glu) + NADPH + H(+). Its pathway is porphyrin-containing compound metabolism; protoporphyrin-IX biosynthesis; 5-aminolevulinate from L-glutamyl-tRNA(Glu): step 1/2. Functionally, catalyzes the NADPH-dependent reduction of glutamyl-tRNA(Glu) to glutamate 1-semialdehyde (GSA). The sequence is that of Glutamyl-tRNA reductase from Helicobacter pylori (strain ATCC 700392 / 26695) (Campylobacter pylori).